The chain runs to 308 residues: Porphobilinogen deaminase (308 aa).

Position 241 is an S-(dipyrrolylmethanemethyl)cysteine (C241).

It belongs to the HMBS family. As to quaternary structure, monomer. The cofactor is dipyrromethane.

The catalysed reaction is 4 porphobilinogen + H2O = hydroxymethylbilane + 4 NH4(+). It participates in porphyrin-containing compound metabolism; protoporphyrin-IX biosynthesis; coproporphyrinogen-III from 5-aminolevulinate: step 2/4. Its function is as follows. Tetrapolymerization of the monopyrrole PBG into the hydroxymethylbilane pre-uroporphyrinogen in several discrete steps. The chain is Porphobilinogen deaminase from Staphylococcus aureus (strain bovine RF122 / ET3-1).